A 323-amino-acid chain; its full sequence is CYFIP-related Rac1 interactor A (323 aa).

The protein belongs to the CYRI family.

It localises to the membrane. May negatively regulate RAC1 signaling and RAC1-driven cytoskeletal remodeling. May regulate chemotaxis, cell migration and epithelial polarization by controlling the polarity, plasticity, duration and extent of protrusions. The protein is CYFIP-related Rac1 interactor A (CYRIA) of Gallus gallus (Chicken).